We begin with the raw amino-acid sequence, 381 residues long: Cytochrome b (381 aa).

The next 4 membrane-spanning stretches (helical) occupy residues 34-54, 78-99, 114-134, and 179-199; these read FGSLLGLCLIIQIVTGLFLAM, WLIRNIHANGASLFFVCIYFHI, WNIGVILLFLLMATAFVGYVL, and FFAFHFLLPFLITALMIIHVL. Heme b contacts are provided by H84 and H98. Residues H183 and H197 each coordinate heme b. H202 lines the a ubiquinone pocket. 4 consecutive transmembrane segments (helical) span residues 227-247, 289-309, 321-341, and 348-368; these read YKDALGFLTLLILLGVLALFL, LGGVLALLFSILILMLVPFLH, LTQIFFWTLVTNMLILTWIGG, and FILIGQIASISYFSLFLIALP.

It belongs to the cytochrome b family. As to quaternary structure, the cytochrome bc1 complex contains 3 respiratory subunits (MT-CYB, CYC1 and UQCRFS1), 2 core proteins (UQCRC1 and UQCRC2) and probably 6 low-molecular weight proteins. Requires heme b as cofactor.

It localises to the mitochondrion inner membrane. Functionally, component of the ubiquinol-cytochrome c reductase complex (complex III or cytochrome b-c1 complex) that is part of the mitochondrial respiratory chain. The b-c1 complex mediates electron transfer from ubiquinol to cytochrome c. Contributes to the generation of a proton gradient across the mitochondrial membrane that is then used for ATP synthesis. The protein is Cytochrome b (mt-cyb) of Isurus oxyrinchus (Shortfin mako shark).